A 456-amino-acid chain; its full sequence is tRNA modification GTPase MnmE (456 aa).

Residues arginine 26, glutamate 86, and arginine 125 each contribute to the (6S)-5-formyl-5,6,7,8-tetrahydrofolate site. The 155-residue stretch at 222-376 (GLSTAIIGRP…IEDRINQLFF (155 aa)) folds into the TrmE-type G domain. Position 232 (asparagine 232) interacts with K(+). Residues 232–237 (NVGKSS), 251–257 (TDIEGTT), and 276–279 (DTAG) each bind GTP. Mg(2+) is bound at residue serine 236. K(+) contacts are provided by threonine 251, isoleucine 253, and threonine 256. Residue threonine 257 participates in Mg(2+) binding. Position 456 (lysine 456) interacts with (6S)-5-formyl-5,6,7,8-tetrahydrofolate.

Belongs to the TRAFAC class TrmE-Era-EngA-EngB-Septin-like GTPase superfamily. TrmE GTPase family. In terms of assembly, homodimer. Heterotetramer of two MnmE and two MnmG subunits. Requires K(+) as cofactor.

The protein resides in the cytoplasm. Exhibits a very high intrinsic GTPase hydrolysis rate. Involved in the addition of a carboxymethylaminomethyl (cmnm) group at the wobble position (U34) of certain tRNAs, forming tRNA-cmnm(5)s(2)U34. The protein is tRNA modification GTPase MnmE of Streptococcus thermophilus (strain CNRZ 1066).